The sequence spans 1219 residues: FK506-binding protein 15 (1219 aa).

An N-acetylmethionine modification is found at Met-1. Residues Ser-14 and Ser-23 each carry the phosphoserine modification. The disordered stretch occupies residues 41-66 (YTAPKQPKKGQGTAATGNQATPKTAP). The span at 53-66 (TAATGNQATPKTAP) shows a compositional bias: polar residues. The segment at 72–169 (PTILVATAVH…AVEFNKQVCI (98 aa)) is important for function in growth cone organization. N6-acetyllysine is present on Lys-92. The PPIase FKBP-type domain maps to 197-290 (GDSLEVAYTG…VFEVEVRRVK (94 aa)). Residues 294–349 (DSGSDGHSVSSRDSAAPSPIPGADNLSADPVVSPPTSIPFKSGEPALRTKSNSLSE) form a disordered region. Phosphoserine is present on residues Ser-307, Ser-311, Ser-326, Ser-344, Ser-346, and Ser-356. Residues 381–433 (PQLDSNDSEIEDVNTLQGGGQPVVTPSVQPSLHPAHPALPQMTSQAPQPSVTG) form a disordered region. Residues 421–433 (QMTSQAPQPSVTG) are compositionally biased toward polar residues. 3 coiled-coil regions span residues 522 to 789 (AVSK…TDQA), 818 to 878 (DEHL…GVEA), and 925 to 951 (TLQLLNQQEQEKEESSSEEEEEKAEER). The residue at position 619 (Ser-619) is a Phosphoserine. Positions 739–761 (LEKNLSERKKKSAQERSQAEEEI) are disordered. Residues 931–1219 (QQEQEKEESS…DDDDDIDWLG (289 aa)) form a disordered region. Phosphoserine is present on residues Ser-939, Ser-940, Ser-941, and Ser-956. The span at 957 to 971 (QEQSASASSGQPQAP) shows a compositional bias: low complexity. Phosphoserine occurs at positions 979, 1024, 1056, 1061, 1065, and 1097. Over residues 1090–1100 (QESSTRLSLTS) the composition is skewed to polar residues. Residue Thr-1099 is modified to Phosphothreonine. Ser-1114 is modified (phosphoserine). Residues 1123 to 1139 (LKKDDVTSSTGPHKELS) are compositionally biased toward basic and acidic residues. A phosphoserine mark is found at Ser-1158, Ser-1161, Ser-1162, Ser-1164, and Ser-1195. The residue at position 1203 (Thr-1203) is a Phosphothreonine. Over residues 1207-1219 (GDDDDDDDIDWLG) the composition is skewed to acidic residues.

Belongs to the FKBP-type PPIase family. As to quaternary structure, interacts with WIP and actin. Interacts with TBC1D23.

It localises to the cytoplasm. It is found in the cell projection. Its subcellular location is the axon. The protein resides in the early endosome. Its function is as follows. May be involved in the cytoskeletal organization of neuronal growth cones. Seems to be inactive as a PPIase. Involved in the transport of early endosomes at the level of transition between microfilament-based and microtubule-based movement. This chain is FK506-binding protein 15 (FKBP15), found in Homo sapiens (Human).